The sequence spans 747 residues: MRKFSVSKVALLAATMAPALLPAAARAEGTAAPAATAPATPMSNRDWWPNRLDLSPLRQHGVESNPMGGKFNYAEEFKTLDLAAVKKDIEALMTTSQDWWPADYGHYGPFFIRMAWHSAGTYRTADGRGGAGGGQQRFEPLNSWPDNVNLDKARRLLWPIKQKYGRKISWADLMVLTGNVALESMGFKTFGFAGGRADDWEADQVFWGPENKWLADQRYHGDRKLQNPLAAVQMGLIYVNPEGPNGNPDPLLAAKDIRETFGRMAMNDEETVALIAGGHTFGKAHGARKPEGCVGVDPAAGAVEDQGLGWNNKCGKGNAEDTVSSGLEGAWTANPIAWTTQYLDNLYAFEWVQTRSPAGAIQWVPKEDATFVPDAHVKDKLHKPIMFTTDLALKTDPAYRKITTKFRQNPDAFADAFARAWFKLTHRDMGPRWRYLGAMVPAEELIWQDPVPKATYAMIDAADVSALKGRILATGLTGPELVRAAWASAASFRGTDMRGGTDGGRIRLAPQKDWAANNPAELARVLKALEGVATEFNRAAKDGKKVSVANLVVLGGNAAIEQAAAKAGVTVEVPFTPGRTDASQAQTDVASFEFLKPAADGFRNYYDASANRLSPSEMLVERANLLTLSVPEMTVLVGGLRALDANAGGARHGVFTDRPGTLSNDFFVNLLGMETKWQKAATDGVYEGLDRKTGKTRWTATPVDLVFGSNSELRAVSEVYGSADANAKFVNDFVAAWTKVMNLGRPS.

An N-terminal signal peptide occupies residues 1–27; it reads MRKFSVSKVALLAATMAPALLPAAARA. Residues 116-238 constitute a cross-link (tryptophyl-tyrosyl-methioninium (Trp-Tyr) (with M-264)); it reads WHSAGTYRTA…LAAVQMGLIY (123 aa). The Proton acceptor role is filled by His-117. The tryptophyl-tyrosyl-methioninium (Tyr-Met) (with W-116) cross-link spans 238–264; the sequence is YVNPEGPNGNPDPLLAAKDIRETFGRM. His-279 serves as a coordination point for heme b.

This sequence belongs to the peroxidase family. Peroxidase/catalase subfamily. In terms of assembly, homodimer or homotetramer. It depends on heme b as a cofactor. Post-translationally, formation of the three residue Trp-Tyr-Met cross-link is important for the catalase, but not the peroxidase activity of the enzyme.

It catalyses the reaction H2O2 + AH2 = A + 2 H2O. The enzyme catalyses 2 H2O2 = O2 + 2 H2O. In terms of biological role, bifunctional enzyme with both catalase and broad-spectrum peroxidase activity. This is Catalase-peroxidase from Novosphingobium aromaticivorans (strain ATCC 700278 / DSM 12444 / CCUG 56034 / CIP 105152 / NBRC 16084 / F199).